The primary structure comprises 419 residues: MSYYGSSYRIVNVDSKYPGYPPEHAIAEKRRARRRLLHKDGSCNVYFKHIFGEWGSYMVDIFTTLVDTKWRHMFVVFSLSYILSWLIFGSIFWLIALHHGDLLSDPDITPCVDNVHSFTAAFLFSLETQTTIGYGYRCVTEECSVAVLTVILQSILSCIINTFIIGAALAKMATARKRAQTIRFSYFALIGMRDGKLCLMWRIGDFRPNHVVEGTVRAQLLRYSEDSEGRMTMAFKDLKLVNDQIILVTPVTIVHEIDHESPLYALDRKAVAKDNFEILVTFIYTGDSTGTSHQSRSSYVPREILWGHRFHDVLEVKRKYYKVNCLQFEGSVEVYAPFCSAKQLDWKDQQLNNLEKTSPARGSCTSDTNTRRRSFSAVAMVSSCENPEETSLSPQDECKEVPYQKALLTLNRISMESQM.

Residues 1–67 are Cytoplasmic-facing; sequence MSYYGSSYRI…MVDIFTTLVD (67 aa). A helical transmembrane segment spans residues 68–94; it reads TKWRHMFVVFSLSYILSWLIFGSIFWL. Residues 95-117 lie on the Extracellular side of the membrane; it reads IALHHGDLLSDPDITPCVDNVHS. Residues 118–134 constitute an intramembrane region (helical; Pore-forming); it reads FTAAFLFSLETQTTIGY. Positions 131–136 match the Selectivity filter motif; that stretch reads TIGYGY. Over 135–143 the chain is Extracellular; the sequence is GYRCVTEEC. The helical transmembrane segment at 144 to 171 threads the bilayer; it reads SVAVLTVILQSILSCIINTFIIGAALAK. At 172–419 the chain is on the cytoplasmic side; that stretch reads MATARKRAQT…LNRISMESQM (248 aa). Phosphoserine is present on residues Ser358, Ser374, and Ser376.

This sequence belongs to the inward rectifier-type potassium channel (TC 1.A.2.1) family. KCNJ16 subfamily. In terms of assembly, it forms heteromeric channels with Kir4.1/KCNJ10; this interaction is required for KCNJ16 localization to the basolateral membrane in kidney cells. As a heteromer with KCNJ10, may interact with MAGI1; this interaction may facilitate KCNJ10/KCNJ16 potassium channel expression at the basolateral membrane in kidney cells. May form heteromers with Kir2.1/KCNJ2. Can form heteromeric channels with Kir4.2/KCNJ15. Expressed in the brain, testis, liver, spleen, kidney, submaxillary gland and adrenals. In the kidney, expressed in the epithelial cells of both proximal and distal convoluted tubules, in the endothelial cells surrounding glomerular capillaries and in the flattened parietal layer of Bowman's capsule.

It localises to the membrane. Its subcellular location is the basolateral cell membrane. The catalysed reaction is K(+)(in) = K(+)(out). With respect to regulation, channel activity is strongly regulated by variations of cytosolic pH; channels are activated by alkaline and inhibited by acidic pH values. Activated by phosphatidylinositol 4,5 biphosphate (PtdIns(4,5)P2). In terms of biological role, inward rectifier potassium channels are characterized by a greater tendency to allow potassium to flow into the cell rather than out of it. Their voltage dependence is regulated by the concentration of extracellular potassium; as external potassium is raised, the voltage range of the channel opening shifts to more positive voltages. The inward rectification is mainly due to the blockage of outward current by internal magnesium. KCNJ16 may be involved in the regulation of fluid and pH balance. In the kidney, together with KCNJ10, mediates basolateral K(+) recycling in distal tubules; this process is critical for Na(+) reabsorption at the tubules. The protein is Inward rectifier potassium channel 16 (Kcnj16) of Rattus norvegicus (Rat).